A 375-amino-acid chain; its full sequence is Actin (375 aa).

The protein belongs to the actin family.

Its subcellular location is the cytoplasm. It localises to the cytoskeleton. It carries out the reaction ATP + H2O = ADP + phosphate + H(+). Functionally, actins are highly conserved proteins that are involved in various types of cell motility and are ubiquitously expressed in all eukaryotic cells. This Sterkiella cavicola (Ciliate) protein is Actin.